We begin with the raw amino-acid sequence, 283 residues long: Arylamine N-acetyltransferase (283 aa).

Cysteine 70 acts as the Acyl-thioester intermediate in catalysis. Active-site residues include histidine 110 and aspartate 127.

This sequence belongs to the arylamine N-acetyltransferase family. As to quaternary structure, homodimer and homotetramer.

It carries out the reaction an arylamine + acetyl-CoA = an N-acetylarylamine + CoA. Its function is as follows. Catalyzes the transfer of the acetyl group from acetyl coenzyme A to the free amino group of arylamines and hydrazines. Is able to utilize not only acetyl-CoA, but also n-propionyl-CoA and acetoacetyl-CoA as acyl donors, although at a lower rate. As acetyl-CoA and propionyl-CoA are products of cholesterol catabolism and the nat gene is likely present in the same operon than genes involved in cholesterol degradation, this enzyme could have a role in the utilization and regulation of these CoA species. The chain is Arylamine N-acetyltransferase (nat) from Mycobacterium bovis (strain ATCC BAA-935 / AF2122/97).